Consider the following 364-residue polypeptide: Chorismate synthase (364 aa).

Positions 48 and 54 each coordinate NADP(+). FMN contacts are provided by residues 129–131 (RSS), 243–244 (NA), Gly-288, 303–307 (KPTSS), and Arg-329.

The protein belongs to the chorismate synthase family. In terms of assembly, homotetramer. FMNH2 is required as a cofactor.

The catalysed reaction is 5-O-(1-carboxyvinyl)-3-phosphoshikimate = chorismate + phosphate. It participates in metabolic intermediate biosynthesis; chorismate biosynthesis; chorismate from D-erythrose 4-phosphate and phosphoenolpyruvate: step 7/7. Catalyzes the anti-1,4-elimination of the C-3 phosphate and the C-6 proR hydrogen from 5-enolpyruvylshikimate-3-phosphate (EPSP) to yield chorismate, which is the branch point compound that serves as the starting substrate for the three terminal pathways of aromatic amino acid biosynthesis. This reaction introduces a second double bond into the aromatic ring system. In Chelativorans sp. (strain BNC1), this protein is Chorismate synthase.